Here is a 1049-residue protein sequence, read N- to C-terminus: Toll-like receptor 7 (1049 aa).

Residues 1 to 26 (MVFPMWTLKRQILILFNIILISKLLG) form the signal peptide. At 27-839 (ARWFPKTLPC…LYTCELDLTN (813 aa)) the chain is on the extracellular side. LRR repeat units lie at residues 43-64 (PKNH…GGIP), 65-87 (TNTT…SFHR), 110-126 (NMCI…FSGL), 127-149 (TYLK…LPPS), 151-170 (QLLS…NLTE), and 171-195 (LANI…SYSI). Residues asparagine 66 and asparagine 69 are each glycosylated (N-linked (GlcNAc...) asparagine). Asparagine 167 carries an N-linked (GlcNAc...) asparagine glycan. N-linked (GlcNAc...) asparagine glycosylation is found at asparagine 202 and asparagine 215. LRR repeat units follow at residues 203–226 (LTKL…LPST), 228–247 (TELY…DFNN), 248–275 (LNQL…PCKN), 289–312 (LTEL…WFKN), 314–337 (NKLQ…KFLH), 339–368 (LPSL…AFSS), 369–392 (LKSL…NLSP), 396–419 (LQNL…MFKQ), and 421–443 (KRLK…SEVG). Residue asparagine 361 is glycosylated (N-linked (GlcNAc...) asparagine). Asparagine 413 carries N-linked (GlcNAc...) asparagine glycosylation. N-linked (GlcNAc...) asparagine glycosylation occurs at asparagine 488. 4 LRR repeats span residues 492-515 (YKYG…DFQH), 516-540 (LSFL…EFQP), 541-564 (LAEL…AFEE), and 566-588 (HKLE…ITHM). Asparagine 523 and asparagine 534 each carry an N-linked (GlcNAc...) asparagine glycan. Residue asparagine 590 is glycosylated (N-linked (GlcNAc...) asparagine). LRR repeat units follow at residues 595–618 (LKVL…TMES), 619–644 (ESLR…RYLQ), 649–672 (LLKL…VFDG), 674–697 (PPNL…KLQC), 698–721 (LKNL…LSNC), 723–745 (RSLK…FLQD), 746–769 (AFQL…SFPE), and 772–795 (LNNL…VWFV). Residues asparagine 679 and asparagine 720 are each glycosylated (N-linked (GlcNAc...) asparagine). Asparagine 799 carries N-linked (GlcNAc...) asparagine glycosylation. A helical membrane pass occupies residues 840–860 (LILFSLSISVSLFLMVMMTAS). Topologically, residues 861–1049 (HLYFWDVWYI…AYSQVFKETV (189 aa)) are cytoplasmic. One can recognise a TIR domain in the interval 889–1033 (CCYDAFIVYD…YFWQCLKNAL (145 aa)).

The protein belongs to the Toll-like receptor family. Homodimer. Interacts with MYD88 via their respective TIR domains. Interacts with UNC93B1. Interacts with SMPDL3B. As to expression, detected in brain, placenta, spleen, stomach, small intestine, lung and in plasmacytoid pre-dendritic cells. Expressed in peripheral mononuclear blood cells.

Its subcellular location is the endoplasmic reticulum membrane. The protein resides in the endosome. The protein localises to the lysosome. It is found in the cytoplasmic vesicle. It localises to the phagosome. Its activity is regulated as follows. Activated by guanosine analogs including deoxyguanosine, 7-thia-8-oxoguanosine or 7-deazaguanosine in a RNA-independent manner. Activated by imiquimod. Its function is as follows. Endosomal receptor that plays a key role in innate and adaptive immunity. Controls host immune response against pathogens through recognition of uridine-containing single strand RNAs (ssRNAs) of viral origin or guanosine analogs. Upon binding to agonists, undergoes dimerization that brings TIR domains from the two molecules into direct contact, leading to the recruitment of TIR-containing downstream adapter MYD88 through homotypic interaction. In turn, the Myddosome signaling complex is formed involving IRAK4, IRAK1, TRAF6, TRAF3 leading to activation of downstream transcription factors NF-kappa-B and IRF7 to induce pro-inflammatory cytokines and interferons, respectively. In plasmacytoid dendritic cells, RNASET2 endonuclease cooperates with PLD3 or PLD4 5'-&gt;3' exonucleases to process RNA and release 2',3'-cyclic guanosine monophosphate (2',3'-cGMP) and cytidine-rich RNA fragments that occupy TLR7 ligand-binding pockets and trigger a signaling-competent state. In Homo sapiens (Human), this protein is Toll-like receptor 7.